The sequence spans 160 residues: MAKSGKRLEELVEELAAPHAAALGLELVGVELVKEGAYRYLRVYIDKEGGVGFDDCEALSRVVDAQLDEILPNPPYDFFEVSSPGLDRPLKREADFARYVGHKVVVTTYAPVDGQKSFVGELQGLVDGRVTLTLTEGKGRGQTIALDRKQVASARLYVEF.

This sequence belongs to the RimP family.

It is found in the cytoplasm. In terms of biological role, required for maturation of 30S ribosomal subunits. This chain is Ribosome maturation factor RimP, found in Symbiobacterium thermophilum (strain DSM 24528 / JCM 14929 / IAM 14863 / T).